The primary structure comprises 840 residues: Probable sulfate permease C869.05c (840 aa).

The next 12 membrane-spanning stretches (helical) occupy residues 120-140 (WLIN…PQGM), 148-168 (LPSE…CFFA), 173-193 (VSIG…ANVM), 208-228 (LALL…GFII), 230-250 (FIPV…ILSG), 278-298 (LPDT…LFFT), 315-335 (AFFL…TAIS), 410-430 (LIAM…PATG), 447-467 (IAGI…TDAF), 470-490 (IPNA…ILPM), 505-525 (CIFF…GIYV), and 527-547 (VCLA…SFLG). Residues 578–733 (NLEIQSPPPG…CVEVAAPLRD (156 aa)) enclose the STAS domain. Phosphoserine is present on Ser823.

This sequence belongs to the SLC26A/SulP transporter (TC 2.A.53) family.

Its subcellular location is the membrane. In terms of biological role, high affinity uptake of sulfate into the cell. The polypeptide is Probable sulfate permease C869.05c (Schizosaccharomyces pombe (strain 972 / ATCC 24843) (Fission yeast)).